A 705-amino-acid polypeptide reads, in one-letter code: Elongation factor G (705 aa).

In terms of domain architecture, tr-type G spans 8 to 294 (DRYRNFGIMA…AVIDYLPSPL (287 aa)). GTP-binding positions include 17–24 (AHIDAGKT), 92–96 (DTPGH), and 146–149 (NKMD).

This sequence belongs to the TRAFAC class translation factor GTPase superfamily. Classic translation factor GTPase family. EF-G/EF-2 subfamily.

It is found in the cytoplasm. Its function is as follows. Catalyzes the GTP-dependent ribosomal translocation step during translation elongation. During this step, the ribosome changes from the pre-translocational (PRE) to the post-translocational (POST) state as the newly formed A-site-bound peptidyl-tRNA and P-site-bound deacylated tRNA move to the P and E sites, respectively. Catalyzes the coordinated movement of the two tRNA molecules, the mRNA and conformational changes in the ribosome. The protein is Elongation factor G of Dinoroseobacter shibae (strain DSM 16493 / NCIMB 14021 / DFL 12).